We begin with the raw amino-acid sequence, 146 residues long: Phospholipase A2 147 (146 aa).

The N-terminal stretch at 1–19 (MYPAHLLVLLAVCVSLLGA) is a signal peptide. The propeptide occupies 20–27 (ASVPPQPL). Disulfide bonds link C38–C98, C54–C145, C56–C72, C71–C126, C78–C119, C87–C112, and C105–C117. Positions 55, 57, and 59 each coordinate Ca(2+). H75 is an active-site residue. D76 serves as a coordination point for Ca(2+). Residue D120 is part of the active site.

It belongs to the phospholipase A2 family. Group I subfamily. D49 sub-subfamily. Requires Ca(2+) as cofactor. As to expression, expressed by the venom gland.

The protein resides in the secreted. The catalysed reaction is a 1,2-diacyl-sn-glycero-3-phosphocholine + H2O = a 1-acyl-sn-glycero-3-phosphocholine + a fatty acid + H(+). Functionally, snake venom phospholipase A2 (PLA2) that inhibits collagen-induced platelet aggregation. PLA2 catalyzes the calcium-dependent hydrolysis of the 2-acyl groups in 3-sn-phosphoglycerides. This Drysdalia coronoides (White-lipped snake) protein is Phospholipase A2 147.